A 367-amino-acid chain; its full sequence is Glutamate 5-kinase (367 aa).

Lysine 10 serves as a coordination point for ATP. 3 residues coordinate substrate: serine 50, aspartate 137, and asparagine 149. ATP contacts are provided by residues 169-170 and 211-217; these read TD and TGGMGTK. The PUA domain maps to 275–353; the sequence is AGEITVDEGA…QQIDAILGYE (79 aa).

Belongs to the glutamate 5-kinase family.

It is found in the cytoplasm. It catalyses the reaction L-glutamate + ATP = L-glutamyl 5-phosphate + ADP. Its pathway is amino-acid biosynthesis; L-proline biosynthesis; L-glutamate 5-semialdehyde from L-glutamate: step 1/2. In terms of biological role, catalyzes the transfer of a phosphate group to glutamate to form L-glutamate 5-phosphate. This Enterobacter sp. (strain 638) protein is Glutamate 5-kinase.